We begin with the raw amino-acid sequence, 437 residues long: Arginine biosynthesis bifunctional protein ArgJ, mitochondrial (437 aa).

6 residues coordinate substrate: Thr173, Lys200, Thr211, Glu297, Asn432, and Ser437. Thr211 functions as the Nucleophile in the catalytic mechanism.

The protein belongs to the ArgJ family. Heterodimer of an alpha and a beta chain. In terms of processing, the alpha and beta chains are autoproteolytically processed from a single precursor protein within the mitochondrion.

The protein resides in the mitochondrion matrix. It carries out the reaction N(2)-acetyl-L-ornithine + L-glutamate = N-acetyl-L-glutamate + L-ornithine. It catalyses the reaction L-glutamate + acetyl-CoA = N-acetyl-L-glutamate + CoA + H(+). It participates in amino-acid biosynthesis; L-arginine biosynthesis; L-ornithine and N-acetyl-L-glutamate from L-glutamate and N(2)-acetyl-L-ornithine (cyclic): step 1/1. Its pathway is amino-acid biosynthesis; L-arginine biosynthesis; N(2)-acetyl-L-ornithine from L-glutamate: step 1/4. Catalyzes two activities which are involved in the cyclic version of arginine biosynthesis: the synthesis of acetylglutamate from glutamate and acetyl-CoA, and of ornithine by transacetylation between acetylornithine and glutamate. This is Arginine biosynthesis bifunctional protein ArgJ, mitochondrial from Zygosaccharomyces rouxii (strain ATCC 2623 / CBS 732 / NBRC 1130 / NCYC 568 / NRRL Y-229).